The chain runs to 140 residues: Probable lipoprotein LppE (140 aa).

A signal peptide spans 1–21; the sequence is MCNRLVTVTGVAMVVAAGLSA. A lipid anchor (N-palmitoyl cysteine) is attached at Cys22. Cys22 is lipidated: S-diacylglycerol cysteine.

This sequence belongs to the mycobacterial 19 kDa antigen family.

It is found in the cell membrane. This Mycobacterium tuberculosis (strain ATCC 25618 / H37Rv) protein is Probable lipoprotein LppE (lppE).